A 273-amino-acid polypeptide reads, in one-letter code: Zinc finger protein 80 (273 aa).

Residues 49–71 form a C2H2-type 1 zinc finger; sequence YKCKECGSVFNKNSLLVRHQQIH. Residues 77 to 99 form a C2H2-type 2; degenerate zinc finger; it reads YEYQECGKAFPEKVDFVRHMRIH. A C2H2-type 3; atypical zinc finger spans residues 105–127; the sequence is CKCVECRKVFNRRSHLLCYRQIH. 4 C2H2-type zinc fingers span residues 133-155, 161-183, 187-211, and 217-239; these read YECS…RVTH, FGCK…MKIH, KPCK…SMTH, and YECK…TRSH.

It belongs to the krueppel C2H2-type zinc-finger protein family.

The protein resides in the nucleus. May be involved in transcriptional regulation. The sequence is that of Zinc finger protein 80 (ZNF80) from Pan troglodytes (Chimpanzee).